Here is a 371-residue protein sequence, read N- to C-terminus: uncharacterized protein (371 aa).

Positions 339 to 371 (KVTHEDLVKNRPRSPVRPPIPATAKTPDLPERH) are disordered.

This is an uncharacterized protein from Escherichia coli (strain K12).